The primary structure comprises 249 residues: Phosphoadenosine 5'-phosphosulfate reductase (249 aa).

Cys230 functions as the Nucleophile; cysteine thiosulfonate intermediate in the catalytic mechanism.

The protein belongs to the PAPS reductase family. CysH subfamily.

It is found in the cytoplasm. The enzyme catalyses [thioredoxin]-disulfide + sulfite + adenosine 3',5'-bisphosphate + 2 H(+) = [thioredoxin]-dithiol + 3'-phosphoadenylyl sulfate. The protein operates within sulfur metabolism; hydrogen sulfide biosynthesis; sulfite from sulfate: step 3/3. Functionally, catalyzes the formation of sulfite from phosphoadenosine 5'-phosphosulfate (PAPS) using thioredoxin as an electron donor. The sequence is that of Phosphoadenosine 5'-phosphosulfate reductase from Synechocystis sp. (strain ATCC 27184 / PCC 6803 / Kazusa).